Consider the following 541-residue polypeptide: Protein wntless homolog B (541 aa).

The Cytoplasmic segment spans residues 1 to 15; the sequence is MAGAIIENMSTKKLC. A helical transmembrane segment spans residues 16 to 36; the sequence is MVGVALLLLQVLAFLVGGLIA. Topologically, residues 37 to 232 are lumenal; that stretch reads PKPTTYVNPV…SIFQNGGFTM (196 aa). The chain crosses the membrane as a helical span at residues 233–253; that stretch reads VWFAMKTFLTPCIIIIMIWYW. Residues 254–268 are Cytoplasmic-facing; the sequence is RRITMMTRSPVLLEK. The chain crosses the membrane as a helical span at residues 269–289; that stretch reads VIFALGISMTFINIPVEWFSI. The Lumenal portion of the chain corresponds to 290 to 303; it reads GYDWTWMLLFGDIR. Residues 304-324 traverse the membrane as a helical segment; that stretch reads QGIFYAMLLSFWIIFCGEHMM. The Cytoplasmic portion of the chain corresponds to 325–331; sequence DQAERNR. The chain crosses the membrane as a helical span at residues 332–352; sequence ISIYWKQVGPIAFGSCCLFIF. Residues 353–379 are Lumenal-facing; that stretch reads DMCERGVQLKNPFYSIWTTDVGAEIAM. A helical transmembrane segment spans residues 380 to 400; sequence AFIIVAGICACLYFLFLCFMV. The Cytoplasmic portion of the chain corresponds to 401 to 431; the sequence is YQVFRNISGKRSNLPAMSKARRLHYEGLIFR. A helical transmembrane segment spans residues 432-452; that stretch reads FKFLMIITLACAALTVVFFIT. Topologically, residues 453-471 are lumenal; that stretch reads TQITEGNWKLGDLSIELNS. A helical membrane pass occupies residues 472–492; it reads AFFTGIYGMWNLYVFALMFLY. The Cytoplasmic portion of the chain corresponds to 493–541; sequence APSHKHYGDGQSNDGAGMSSGEELQLTTTITHIDGPTELYRLAGKEAQE.

The protein belongs to the wntless family. Enriched in the animal hemisphere of the early cleavage embryo, where expression persists until the late gastrula stage. At the neurula stage, strongly expressed at the border of the neural plate and dorsal midline. After the neurula stage, expressed in various organs, including the eye, liver, heart, pronephros, otic vesicle, and dorsal neural tube. Expression in the developing eye is dynamic; expressed in the eye field from stages 23 to 27, and from stage 30 expression is confined to distinct regions including the central part and border of the eye.

The protein localises to the golgi apparatus membrane. It localises to the cytoplasmic vesicle membrane. Required for a subset of Wnt-dependent developmental processes, in particular, eye and pronephros development. Regulates the secretion of wnt4, which is required for eye development. This chain is Protein wntless homolog B (wls-b), found in Xenopus laevis (African clawed frog).